The primary structure comprises 104 residues: Nucleoid-associated protein LSL_1227 (104 aa).

Residues 1–19 (MMMRGMNMQSMMKQMQKLQ) are compositionally biased toward low complexity. The segment at 1-24 (MMMRGMNMQSMMKQMQKLQKNMKK) is disordered.

This sequence belongs to the YbaB/EbfC family. In terms of assembly, homodimer.

Its subcellular location is the cytoplasm. It is found in the nucleoid. Its function is as follows. Binds to DNA and alters its conformation. May be involved in regulation of gene expression, nucleoid organization and DNA protection. This Ligilactobacillus salivarius (strain UCC118) (Lactobacillus salivarius) protein is Nucleoid-associated protein LSL_1227.